The sequence spans 518 residues: Calcium-dependent protein kinase 1 (518 aa).

Over residues 1-10 (MGNRTSRHHR) the composition is skewed to basic residues. Positions 1 to 49 (MGNRTSRHHRAAPEQPPPQPKPKPQPQQQQQQWPRPQQPTPPPAAAPDA) are disordered. A lipid anchor (N-myristoyl glycine) is attached at glycine 2. The span at 14-25 (EQPPPQPKPKPQ) shows a compositional bias: pro residues. The span at 26–35 (PQQQQQQWPR) shows a compositional bias: low complexity. Over residues 36 to 45 (PQQPTPPPAA) the composition is skewed to pro residues. The 259-residue stretch at 66–324 (YTFGRELGRG…SAEILNHPWI (259 aa)) folds into the Protein kinase domain. ATP contacts are provided by residues 72-80 (LGRGQFGVT) and lysine 95. Residue aspartate 190 is the Proton acceptor of the active site. Residues 330 to 360 (APDKPLDITVISRMKQFRAMNKLKKVALKVV) are autoinhibitory domain. EF-hand domains lie at 367–402 (EEITGLKEMFRSLDTDNSGTITLEELRSGLPKLGTK), 403–438 (ISESEIRQLMEAADVDGNGTIDYAEFISATMHMNRL), 439–474 (EKEDHILKAFEYFDKDHSGYITVDELEEALKKYDMG), and 475–509 (DDKTIKEIIAEVDTDHDGRINYQEFVAMMRNNNPE). Residues aspartate 380, aspartate 382, serine 384, threonine 386, glutamate 391, aspartate 416, aspartate 418, asparagine 420, threonine 422, glutamate 427, aspartate 452, aspartate 454, serine 456, tyrosine 458, glutamate 463, aspartate 487, aspartate 489, aspartate 491, arginine 493, and glutamate 498 each coordinate Ca(2+).

It belongs to the protein kinase superfamily. Ser/Thr protein kinase family. CDPK subfamily. As to expression, expressed in roots and leaf blades.

The protein localises to the membrane. The enzyme catalyses L-seryl-[protein] + ATP = O-phospho-L-seryl-[protein] + ADP + H(+). It carries out the reaction L-threonyl-[protein] + ATP = O-phospho-L-threonyl-[protein] + ADP + H(+). With respect to regulation, activated by calcium. Autophosphorylation may play an important role in the regulation of the kinase activity. In terms of biological role, may play a role in signal transduction pathways that involve calcium as a second messenger. The protein is Calcium-dependent protein kinase 1 of Oryza sativa subsp. japonica (Rice).